Reading from the N-terminus, the 966-residue chain is MEQDYKPHEIENKWQKKWNESRIFQAEPDKREKFFITIPYPYLNGNLHAGHTRTFTIGDVVARHKRMLGYNVLYPMGFHVTGTPIVGLAELIASRDPQTMDVYERLHGIPGDILPALDTPEKIVDYFKVEAEKAMRMIGYSIDWRRKFTTTDPTYKKFIEWQYTRLEEKDLIVKGSHPVKWCPNDNNPVEDHDILHGEEATIVEYTLIKFRYRDLVLPCATLRPETTYGVTNLWVNPNVDYVKARVEKDGNVEFWVVSRDAFRKLTFTDRTVEYVEDMPAKSIIGIKLTNPVTGDEVISLPASFVKPENGSGIVMSVPAHAPFDYLALRDLYDADLSEYGITEDLRKIELISLIQVPEFGEFPAKEIVESMGISDQKDPKAEEATKIVYRREFHGGVLKELTGKYKGYPVSKIKDILTRDFLASNAGETFYEFSEPVVCRCGTPCVVNMVKGQWFLNYSNPDWKAKVYKCLGQMRVIPTEYRVEFENKIDWLKDKACARRKGLGTRLPFDKEWLIESLGDSTIYMSYYIIARFIEKGELALEHLTLSFFDYVLLGKGDSAAVSAETGLKPELIEEIRSHFNYWYPVDLRSSGKDLVPNHLLFFLFHHVALFEEEKWPKALAVNGFVSLEGQKMSKSKGPILTLESAVSSYGADITRMYILSTAEQTQDADWQKAGIDSARRQVDRFYAFAKDVIESGKRGTLSAELKQIDRWMLSRMQNYIKETNAALDSIQTREAIQNSFFLLINDVRWYQRRGGEALLYYVLDNWVRLMAPFTPHLCEEVWEAMGHEDPVSLAQYPLYNEDLIDNGAELSEEAVKSTLNDIEEIIRVTKMTPQKVYLYTAPAWKAEAIRCACGLQVEAPLEVGTLIKTLMAKPELKRFGKEIPKFVQKIVPEFKSGGAERYETFAYLGLDEKDLLKESASFLEKEIGCPVEIQSADSPEYDPQKKSRFAEPLRPAIYIEEKKEE.

Residues 41–51 (PYLNGNLHAGH) carry the 'HIGH' region motif. Positions 632 to 636 (KMSKS) match the 'KMSKS' region motif. Lys-635 contacts ATP.

Belongs to the class-I aminoacyl-tRNA synthetase family.

The protein localises to the cytoplasm. It catalyses the reaction tRNA(Leu) + L-leucine + ATP = L-leucyl-tRNA(Leu) + AMP + diphosphate. The protein is Leucine--tRNA ligase of Methanosarcina mazei (strain ATCC BAA-159 / DSM 3647 / Goe1 / Go1 / JCM 11833 / OCM 88) (Methanosarcina frisia).